A 105-amino-acid polypeptide reads, in one-letter code: Integration host factor (105 aa).

Positions L64–K71 match the H2TH motif, binds DNA motif. Residues A82–Q94 form a lid, binds DNA region.

The protein belongs to the actinobacterial IHF (aIHF) family. In terms of assembly, homodimer in solution. Binds DNA as a monomer.

It is found in the cytoplasm. In terms of biological role, a nucleoid-associated protein (NAP) required for septum formation and normal cell division as well as for DNA segregation. Binds about 135 sites across the chromosome, most of which are genes involved in virulence; most DNA-binding sites are immediately upstream of transcription start sites. When mIHF is depleted most of the genes are down-regulated. Binds supercoiled and linear dsDNA in a concentration-dependent manner, probably non-sequence specifically. Binding compacts DNA, protecting it from degradation. Initial binding to supercoiled DNA opens it fully, followed by bending and compaction. Bends and thus compacts linear DNA. Binds DNA via 2 sites, forms left-handed loops on linear DNA; at low concentrations unwinds larger cosmids (42.6 kb) then collapses and condenses DNA as protein levels rise. Forms mostly left-handed loops on condensing cosmid DNA. This Mycobacterium tuberculosis (strain ATCC 25618 / H37Rv) protein is Integration host factor.